Here is a 453-residue protein sequence, read N- to C-terminus: Divalent metal cation transporter MntH (453 aa).

11 consecutive transmembrane segments (helical) span residues 39 to 59 (LAFL…GNWI), 66 to 86 (AQYG…AMLL), 114 to 134 (AIMF…AEVI), 146 to 166 (IPLI…LFIM), 175 to 195 (AIVG…VYIS), 217 to 237 (GILY…NLYL), 270 to 290 (LSIA…LFFG), 310 to 330 (PALG…ALLA), 362 to 382 (LITR…FKGN), 388 to 408 (QLLV…LIPL), and 427 to 447 (INII…YLII).

The protein belongs to the NRAMP family.

Its subcellular location is the cell membrane. Its function is as follows. H(+)-stimulated, divalent metal cation uptake system. This Staphylococcus epidermidis (strain ATCC 12228 / FDA PCI 1200) protein is Divalent metal cation transporter MntH.